We begin with the raw amino-acid sequence, 30 residues long: ADDRNPLEECFRETDYEEFLEIAKNGLSTT.

The protein belongs to the flavin monoamine oxidase family. FIG1 subfamily. Monomer. This is in contrast with most of its orthologs, that are non-covalently linked homodimers. It depends on FAD as a cofactor. Post-translationally, N-glycosylated. Expressed by the venom gland.

It localises to the secreted. The enzyme catalyses an L-alpha-amino acid + O2 + H2O = a 2-oxocarboxylate + H2O2 + NH4(+). It catalyses the reaction L-leucine + O2 + H2O = 4-methyl-2-oxopentanoate + H2O2 + NH4(+). The catalysed reaction is L-phenylalanine + O2 + H2O = 3-phenylpyruvate + H2O2 + NH4(+). It carries out the reaction L-tryptophan + O2 + H2O = indole-3-pyruvate + H2O2 + NH4(+). The enzyme catalyses L-methionine + O2 + H2O = 4-methylsulfanyl-2-oxobutanoate + H2O2 + NH4(+). It catalyses the reaction L-2-aminohexanoate + O2 + H2O = 2-oxohexanoate + H2O2 + NH4(+). The catalysed reaction is L-tyrosine + O2 + H2O = 3-(4-hydroxyphenyl)pyruvate + H2O2 + NH4(+). In terms of biological role, catalyzes an oxidative deamination of predominantly hydrophobic and aromatic L-amino acids, thus producing hydrogen peroxide that may contribute to the diverse toxic effects of this enzyme. Is highly active against L-Met, L-Leu, L-norleucine (L-2-aminohexanoate), L-Trp, L-Phe, moderately active against L-Tyr, and no active on L-Gly, L-Ala, L-Val, L-Pro, L-His, L-Lys, L-Arg, L-Asp, L-Asn, L-Gln, L-Glu, L-Ser, and L-Thr. Exhibits diverse biological activities, such as hemorrhage, hemolysis, edema, antibacterial and antiparasitic activities. In addition, this protein induces apoptosis. It also interacts with endothelial cells, and inhibits collagen- and ADP-induced platelet aggregation. L-LAAO family effects on platelets are controversial, since it either induces aggregation or inhibits agonist-induced aggregation. These different effects are probably due to different experimental conditions. This Bothrops leucurus (Whitetail lancehead) protein is L-amino-acid oxidase.